Here is a 432-residue protein sequence, read N- to C-terminus: Protein prenyltransferase alpha subunit repeat-containing protein 1-A (432 aa).

PFTA repeat units lie at residues 86–119, 121–154, 179–212, 218–251, 294–327, and 395–432; these read ELID…TLNP, KDLQ…VQEL, EEMH…GNLK, DELS…LSKT, EEMD…HQLL, and SFDS…LQGH.

It belongs to the protein prenyltransferase subunit alpha family.

This is Protein prenyltransferase alpha subunit repeat-containing protein 1-A (ptar1-a) from Xenopus laevis (African clawed frog).